The primary structure comprises 319 residues: Ornithine carbamoyltransferase (319 aa).

Residues 57-60 (STRT), Gln-84, Arg-108, and 135-138 (HPCQ) each bind carbamoyl phosphate. L-ornithine is bound by residues Asn-166, Asp-230, and 234–235 (SM). Residues 270-271 (CL) and Arg-298 each bind carbamoyl phosphate.

The protein belongs to the aspartate/ornithine carbamoyltransferase superfamily. OTCase family.

The protein resides in the cytoplasm. It catalyses the reaction carbamoyl phosphate + L-ornithine = L-citrulline + phosphate + H(+). Its pathway is amino-acid biosynthesis; L-arginine biosynthesis; L-arginine from L-ornithine and carbamoyl phosphate: step 1/3. Its function is as follows. Reversibly catalyzes the transfer of the carbamoyl group from carbamoyl phosphate (CP) to the N(epsilon) atom of ornithine (ORN) to produce L-citrulline. The chain is Ornithine carbamoyltransferase (argF) from Bacillus subtilis (strain 168).